The chain runs to 466 residues: 3-isopropylmalate dehydratase large subunit (466 aa).

Residues Cys347, Cys407, and Cys410 each coordinate [4Fe-4S] cluster.

This sequence belongs to the aconitase/IPM isomerase family. LeuC type 1 subfamily. In terms of assembly, heterodimer of LeuC and LeuD. Requires [4Fe-4S] cluster as cofactor.

It catalyses the reaction (2R,3S)-3-isopropylmalate = (2S)-2-isopropylmalate. Its pathway is amino-acid biosynthesis; L-leucine biosynthesis; L-leucine from 3-methyl-2-oxobutanoate: step 2/4. Its function is as follows. Catalyzes the isomerization between 2-isopropylmalate and 3-isopropylmalate, via the formation of 2-isopropylmaleate. The protein is 3-isopropylmalate dehydratase large subunit of Shigella dysenteriae serotype 1 (strain Sd197).